The following is a 459-amino-acid chain: Cobyrinate a,c-diamide synthase (459 aa).

In terms of domain architecture, GATase cobBQ-type spans 252 to 446 (TLALADDEAF…LHVHFAQRPE (195 aa)). C334 serves as the catalytic Nucleophile.

It belongs to the CobB/CbiA family. As to quaternary structure, monomer. It depends on Mg(2+) as a cofactor.

It catalyses the reaction cob(II)yrinate + 2 L-glutamine + 2 ATP + 2 H2O = cob(II)yrinate a,c diamide + 2 L-glutamate + 2 ADP + 2 phosphate + 2 H(+). It participates in cofactor biosynthesis; adenosylcobalamin biosynthesis; cob(II)yrinate a,c-diamide from sirohydrochlorin (anaerobic route): step 10/10. Catalyzes the ATP-dependent amidation of the two carboxylate groups at positions a and c of cobyrinate, using either L-glutamine or ammonia as the nitrogen source. Is able to use other nucleotide triphosphates as substrate, such as GTP or UTP, although less efficiently than ATP. This chain is Cobyrinate a,c-diamide synthase, found in Salmonella typhimurium (strain LT2 / SGSC1412 / ATCC 700720).